Consider the following 331-residue polypeptide: Glucokinase (331 aa).

14–19 contributes to the ATP binding site; the sequence is GDIGGT.

The protein belongs to the bacterial glucokinase family.

The protein resides in the cytoplasm. The enzyme catalyses D-glucose + ATP = D-glucose 6-phosphate + ADP + H(+). This is Glucokinase from Aromatoleum aromaticum (strain DSM 19018 / LMG 30748 / EbN1) (Azoarcus sp. (strain EbN1)).